The following is a 366-amino-acid chain: Chorismate synthase (366 aa).

The NADP(+) site is built by R48 and R54. FMN-binding positions include 125–127, 238–239, G278, 293–297, and R319; these read RSS, NA, and KPTSS.

It belongs to the chorismate synthase family. As to quaternary structure, homotetramer. FMNH2 serves as cofactor.

The catalysed reaction is 5-O-(1-carboxyvinyl)-3-phosphoshikimate = chorismate + phosphate. Its pathway is metabolic intermediate biosynthesis; chorismate biosynthesis; chorismate from D-erythrose 4-phosphate and phosphoenolpyruvate: step 7/7. Catalyzes the anti-1,4-elimination of the C-3 phosphate and the C-6 proR hydrogen from 5-enolpyruvylshikimate-3-phosphate (EPSP) to yield chorismate, which is the branch point compound that serves as the starting substrate for the three terminal pathways of aromatic amino acid biosynthesis. This reaction introduces a second double bond into the aromatic ring system. This Burkholderia multivorans (strain ATCC 17616 / 249) protein is Chorismate synthase.